The following is a 346-amino-acid chain: Growth hormone-inducible transmembrane protein (346 aa).

A mitochondrion-targeting transit peptide spans 1 to 45 (MLAARLVCLRTLPSRVFQPTFITKASPLVKNSITKNQWLLTPSRE). The Mitochondrial matrix portion of the chain corresponds to 46-83 (YATKTRIRTHRGKTGQELKEAALEPSLEKVFKIDQMGK). The helical transmembrane segment at 84–104 (WFVAGGAAVGLGALCYYGLGM) threads the bilayer. Residues 105–126 (SNEIGAIEKAVIWPQYVKDRIH) are Mitochondrial intermembrane-facing. A helical membrane pass occupies residues 127 to 147 (STYMYLAGSIGLTALSALALA). Residues 148 to 160 (RSPALMNFMMTGS) are Mitochondrial matrix-facing. Residues 161 to 181 (WMTIGATFAAMIGAGMLVQSI) form a helical membrane-spanning segment. Over 182–191 (SYEQSPGPKH) the chain is Mitochondrial intermembrane. Residues 192–212 (LAWMLHSGVMGAVVAPLTILG) traverse the membrane as a helical segment. At 213-214 (GP) the chain is on the mitochondrial matrix side. A helical membrane pass occupies residues 215–235 (LLLRAAWYTAGIVGGLSTVAM). The Mitochondrial intermembrane portion of the chain corresponds to 236 to 245 (CAPSEKFLNM). The chain crosses the membrane as a helical span at residues 246-266 (GAPLGVGLGLVFASSLGSMFL). The Mitochondrial matrix segment spans residues 267–272 (PPTSVA). A helical membrane pass occupies residues 273-293 (GATLYSVAMYGGLVLFSMFLL). The Mitochondrial intermembrane segment spans residues 294–346 (YDTQKVVKRAEITPAYGAQKYDPINSMLTIYMDTLNIFMRVATMLATGSNRKK).

Belongs to the BI1 family. Interacts with LETM1 and AFG3L2. Post-translationally, undergoes AFG3L2-mediated proteolytic degradation, upon hyperpolarization of mitochondria.

It is found in the mitochondrion inner membrane. Plays an important role in maintenance of mitochondrial morphology and in mediating either calcium or potassium/proton antiport. Mediates proton-dependent calcium efflux from mitochondrion. Also functions as an electroneutral mitochondrial proton/potassium exchanger. Required for the mitochondrial tubular network and cristae organization. Involved in apoptotic release of cytochrome c. Inhibits AFG3L2 proteolytic activity, stimulating respiration and stabilizing respiratory enzymes in actively respiring mitochondria. However, when mitochondria become hyperpolarized, GHITM loses its inhibitory activity toward AFG3L2 and the now active AFG3L2 turns first on GHITM and, if hyperpolarization persists, on other proteins of the mitochondria, leading to a broad remodeling of the proteome. The polypeptide is Growth hormone-inducible transmembrane protein (Ghitm) (Rattus norvegicus (Rat)).